A 576-amino-acid polypeptide reads, in one-letter code: RNA-binding post-transcriptional regulator cip2 (576 aa).

The RRM domain occupies 232-310; the sequence is TAIVIKNIPF…RRLRVEWKRQ (79 aa). Positions 355–420 constitute an R3H domain; the sequence is DPAILNVYSH…AKQVVITMPS (66 aa).

In terms of assembly, interacts with csx1. Post-translationally, phosphorylated by sty1.

The protein resides in the cytoplasm. In terms of biological role, regulates global gene expression after oxidative stress. Interacts and stabilizes mRNAs and may regulate their transition between different cytoplasmic components after oxidative stress. The polypeptide is RNA-binding post-transcriptional regulator cip2 (cip2) (Schizosaccharomyces pombe (strain 972 / ATCC 24843) (Fission yeast)).